We begin with the raw amino-acid sequence, 510 residues long: Serine/threonine protein phosphatase 2A 57 kDa regulatory subunit B' kappa isoform (510 aa).

The interval 1-51 is disordered; that stretch reads MWKGFLSKLPRKTSASGRGADLDSGQCSNGAGNGNPIQRTSSCGSIPSGRS. Positions 25–51 are enriched in polar residues; the sequence is GQCSNGAGNGNPIQRTSSCGSIPSGRS. A phosphothreonine mark is found at T476 and T493. Position 502 is a phosphoserine (S502). Position 508 is a phosphothreonine (T508).

It belongs to the phosphatase 2A regulatory subunit B56 family. As to quaternary structure, PP2A consists of a common heteromeric enzyme, composed of a catalytic subunit (subunits C), a constant regulatory subunit (subunit A), and a variety of regulatory subunits such as subunits B (the R2/B/PR55/B55, R3/B''/PR72/PR130/PR59 and R5/B'/B56 families). Interacts with SIT1. In terms of processing, phosphorylated at Thr-476, Thr-493, Ser-502 and Thr-508 by SIT1. Expressed in root stele and epidermal cells.

The protein resides in the cytoplasm. Its subcellular location is the cytosol. The protein localises to the cell membrane. Functionally, b regulatory subunit of phosphatase 2A (PP2A) involved in salt stress response. Under salt stress conditions, required for the catalytic activity of PP2A and the dephosphorylation of SIT1, a negative regulator of salt tolerance. Dephosphorylation of SIT1 turns off salt-induced SIT1 activity directly, which has a positive effect on salt tolerance. This Oryza sativa subsp. japonica (Rice) protein is Serine/threonine protein phosphatase 2A 57 kDa regulatory subunit B' kappa isoform.